A 441-amino-acid chain; its full sequence is tRNA modification GTPase MnmE (441 aa).

Positions 21, 78, and 117 each coordinate (6S)-5-formyl-5,6,7,8-tetrahydrofolate. Residues 211–363 (GIVMTIVGKP…LENKIVSKVK (153 aa)) enclose the TrmE-type G domain. Residue Asn-221 coordinates K(+). GTP contacts are provided by residues 221-226 (NSGKST), 240-246 (TDIPGTT), and 265-268 (DTAG). Ser-225 contributes to the Mg(2+) binding site. Residues Thr-240, Ile-242, and Thr-245 each contribute to the K(+) site. Thr-246 contacts Mg(2+). Position 441 (Lys-441) interacts with (6S)-5-formyl-5,6,7,8-tetrahydrofolate.

Belongs to the TRAFAC class TrmE-Era-EngA-EngB-Septin-like GTPase superfamily. TrmE GTPase family. Homodimer. Heterotetramer of two MnmE and two MnmG subunits. K(+) is required as a cofactor.

It is found in the cytoplasm. In terms of biological role, exhibits a very high intrinsic GTPase hydrolysis rate. Involved in the addition of a carboxymethylaminomethyl (cmnm) group at the wobble position (U34) of certain tRNAs, forming tRNA-cmnm(5)s(2)U34. The chain is tRNA modification GTPase MnmE from Thermosipho melanesiensis (strain DSM 12029 / CIP 104789 / BI429).